Consider the following 869-residue polypeptide: Phenylalanine--tRNA ligase beta subunit (869 aa).

The tRNA-binding domain maps to 41-162 (SQVTGPIVVG…QYGFSEAEYE (122 aa)). One can recognise a B5 domain in the interval 443-519 (PRAKAIHFKA…RLVGYDQIPI (77 aa)). Positions 497, 503, 506, and 507 each coordinate Mg(2+). The FDX-ACB domain maps to 776–868 (STFPPVKQDL…EAAEIGAQLR (93 aa)).

This sequence belongs to the phenylalanyl-tRNA synthetase beta subunit family. Type 1 subfamily. As to quaternary structure, tetramer of two alpha and two beta subunits. Mg(2+) is required as a cofactor.

The protein resides in the cytoplasm. The enzyme catalyses tRNA(Phe) + L-phenylalanine + ATP = L-phenylalanyl-tRNA(Phe) + AMP + diphosphate + H(+). The protein is Phenylalanine--tRNA ligase beta subunit of Bifidobacterium longum (strain NCC 2705).